Consider the following 225-residue polypeptide: Putative elongation factor 1 gamma homolog (225 aa).

Residues 94–225 (DFKTRADILR…MCETEMQPIK (132 aa)) form the GST C-terminal domain.

In Saccharomyces cerevisiae (strain ATCC 204508 / S288c) (Baker's yeast), this protein is Putative elongation factor 1 gamma homolog.